We begin with the raw amino-acid sequence, 337 residues long: Ornithine carbamoyltransferase (337 aa).

Residues 56–59 (STRT), glutamine 83, arginine 107, and 134–137 (HPTQ) each bind carbamoyl phosphate. L-ornithine is bound by residues asparagine 168, aspartate 232, and 236-237 (SM). Residues 274–275 (CL) and arginine 320 each bind carbamoyl phosphate.

It belongs to the aspartate/ornithine carbamoyltransferase superfamily. OTCase family.

It is found in the cytoplasm. It carries out the reaction carbamoyl phosphate + L-ornithine = L-citrulline + phosphate + H(+). The protein operates within amino-acid biosynthesis; L-arginine biosynthesis; L-arginine from L-ornithine and carbamoyl phosphate: step 1/3. Functionally, reversibly catalyzes the transfer of the carbamoyl group from carbamoyl phosphate (CP) to the N(epsilon) atom of ornithine (ORN) to produce L-citrulline. This is Ornithine carbamoyltransferase from Shigella flexneri serotype 5b (strain 8401).